The following is a 120-amino-acid chain: Large ribosomal subunit protein uL18 (120 aa).

The protein belongs to the universal ribosomal protein uL18 family. Part of the 50S ribosomal subunit; part of the 5S rRNA/L5/L18/L25 subcomplex. Contacts the 5S and 23S rRNAs.

Functionally, this is one of the proteins that bind and probably mediate the attachment of the 5S RNA into the large ribosomal subunit, where it forms part of the central protuberance. The polypeptide is Large ribosomal subunit protein uL18 (Clostridium novyi (strain NT)).